The chain runs to 255 residues: Large ribosomal subunit protein uL4 (255 aa).

The protein belongs to the universal ribosomal protein uL4 family. As to quaternary structure, part of the 50S ribosomal subunit.

Its function is as follows. One of the primary rRNA binding proteins, this protein initially binds near the 5'-end of the 23S rRNA. It is important during the early stages of 50S assembly. It makes multiple contacts with different domains of the 23S rRNA in the assembled 50S subunit and ribosome. Functionally, forms part of the polypeptide exit tunnel. The protein is Large ribosomal subunit protein uL4 of Thermococcus onnurineus (strain NA1).